A 200-amino-acid polypeptide reads, in one-letter code: Large ribosomal subunit protein uL4 (200 aa).

Residues 43 to 67 (RAQKTRAEVSGSGKKPWRQKGTGRA) are disordered.

Belongs to the universal ribosomal protein uL4 family. Part of the 50S ribosomal subunit.

Functionally, one of the primary rRNA binding proteins, this protein initially binds near the 5'-end of the 23S rRNA. It is important during the early stages of 50S assembly. It makes multiple contacts with different domains of the 23S rRNA in the assembled 50S subunit and ribosome. Forms part of the polypeptide exit tunnel. This is Large ribosomal subunit protein uL4 from Haemophilus influenzae (strain PittEE).